Here is a 500-residue protein sequence, read N- to C-terminus: Nucleolar and spindle-associated protein 1 (500 aa).

Disordered regions lie at residues 48–204 (KNET…NFKK), 241–299 (TKKS…ASKS), 319–353 (VRFSEATKDNEHKRSLIKTPARKSSSFLAVTPESE), and 365–500 (ELLP…VPVK). Over residues 82-92 (THRRGRGRKPI) the composition is skewed to basic residues. The span at 113–127 (NMASSIDRTQQQNCT) shows a compositional bias: polar residues. Positions 264-274 (SRLSLLSPLPR) are enriched in low complexity. The segment covering 276–298 (TGASPSRTPMSQRRSCRSSTASK) has biased composition (polar residues). Basic and acidic residues predominate over residues 323 to 332 (EATKDNEHKR). Positions 380–392 (ITLNTTTQPSPAT) are enriched in polar residues. Residues 442–451 (PWGESKENKP) show a composition bias toward basic and acidic residues. Polar residues predominate over residues 452–469 (DPNSNVSVLKNNYKQPHL).

This sequence belongs to the NUSAP family. As to quaternary structure, interacts with DNA, microtubules, ipo7, kpna2 and kpnb1. Microtubule stabilization is inhibited by ipo7 and kpna2, while microtubule bundling is inhibited by kpnb1. Active GTP-bound ran causes dissociation of ipo7 and kpnb1.

The protein localises to the cytoplasm. It localises to the nucleus. It is found in the cytoskeleton. The protein resides in the spindle. Functionally, microtubule-associated protein with the capacity to bundle and stabilize microtubules. May associate with chromosomes and promote the organization of meiotic or mitotic spindle microtubules around them. This Xenopus tropicalis (Western clawed frog) protein is Nucleolar and spindle-associated protein 1 (nusap1).